We begin with the raw amino-acid sequence, 86 residues long: Toxin Td1 (86 aa).

The signal sequence occupies residues 1-20; it reads MIRFILFISCFFLIGMVIEC. In terms of domain architecture, LCN-type CS-alpha/beta spans 21 to 83; the sequence is KDGYLMEPNG…VWERATNRCG (63 aa). 4 disulfide bridges follow: cysteine 31–cysteine 82, cysteine 35–cysteine 57, cysteine 43–cysteine 63, and cysteine 47–cysteine 65. Position 84 is a lysine amide (lysine 84).

In terms of tissue distribution, expressed by the venom gland.

Its subcellular location is the secreted. Its function is as follows. Beta toxins bind voltage-independently at site-4 of sodium channels (Nav) and shift the voltage of activation toward more negative potentials thereby affecting sodium channel activation and promoting spontaneous and repetitive firing. The polypeptide is Toxin Td1 (Tityus discrepans (Venezuelan scorpion)).